Here is a 140-residue protein sequence, read N- to C-terminus: Histone H2B (140 aa).

Basic and acidic residues predominate over residues 1-10 (MPPKAAEKKP). The interval 1–48 (MPPKAAEKKPSTGGKAPAGKAPAEKKEAGKKTAAAASGDKKKRGKTRK) is disordered. An N6-acetyllysine; alternate mark is found at K8 and K9. Glycyl lysine isopeptide (Lys-Gly) (interchain with G-Cter in SUMO); alternate cross-links involve residues K8 and K9. Residues 11–21 (STGGKAPAGKA) are compositionally biased toward low complexity. An N6-acetyllysine modification is found at K15. An N6-acetyllysine; alternate modification is found at K25. A Glycyl lysine isopeptide (Lys-Gly) (interchain with G-Cter in SUMO); alternate cross-link involves residue K25. Residue K26 forms a Glycyl lysine isopeptide (Lys-Gly) (interchain with G-Cter in SUMO) linkage. K134 participates in a covalent cross-link: Glycyl lysine isopeptide (Lys-Gly) (interchain with G-Cter in ubiquitin).

This sequence belongs to the histone H2B family. In terms of assembly, the nucleosome is a histone octamer containing two molecules each of H2A, H2B, H3 and H4 assembled in one H3-H4 heterotetramer and two H2A-H2B heterodimers. The octamer wraps approximately 147 bp of DNA. In terms of processing, monoubiquitinated by the ubc2-bre1 complex to form H2BK123ub1. H2BK123ub1 gives a specific tag for epigenetic transcriptional activation and is also prerequisite for H3K4me and H3K79me formation. H2BK123ub1 also modulates the formation of double-strand breaks during meiosis and is a prerequisite for DNA-damage checkpoint activation. Post-translationally, acetylated by gcn5 to form H2BK11ac and H2BK16ac. H2BK16ac can also be formed by esa1. Acetylation of N-terminal lysines and particularly formation of H2BK11acK16ac has a positive effect on transcription. Sumoylation to form H2BK6su or H2BK7su, and probably also H2BK16su or H2BK17su, occurs preferentially near the telomeres and represses gene transcription.

It localises to the nucleus. It is found in the chromosome. Core component of nucleosome. Nucleosomes wrap and compact DNA into chromatin, limiting DNA accessibility to the cellular machineries which require DNA as a template. Histones thereby play a central role in transcription regulation, DNA repair, DNA replication and chromosomal stability. DNA accessibility is regulated via a complex set of post-translational modifications of histones, also called histone code, and nucleosome remodeling. The sequence is that of Histone H2B (htb1) from Aspergillus clavatus (strain ATCC 1007 / CBS 513.65 / DSM 816 / NCTC 3887 / NRRL 1 / QM 1276 / 107).